The sequence spans 114 residues: Pro-FMRFamide-related neuropeptide FF (114 aa).

The N-terminal stretch at 1–21 (MDSKWAALLLLLLLLLNWGHT) is a signal peptide. Positions 22–69 (EEAGSWGEDQVFAGEDKGPHPPQYAHIPDRIQTPGSLFRVLLQAMDTP) are excised as a propeptide. The residue at position 82 (F82) is a Phenylalanine amide. The propeptide occupies 85-100 (SAWGSWSKEQLNPQAR). A Phenylalanine amide modification is found at F111.

It belongs to the FARP (FMRFamide related peptide) family.

The protein localises to the secreted. Morphine modulating peptides. Have wide-ranging physiologic effects, including the modulation of morphine-induced analgesia, elevation of arterial blood pressure, and increased somatostatin secretion from the pancreas. Neuropeptide FF potentiates and sensitizes ASIC1 and ASIC3 channels. This chain is Pro-FMRFamide-related neuropeptide FF (Npff), found in Mus musculus (Mouse).